The chain runs to 96 residues: Pyrimidine/purine nucleoside phosphorylase (96 aa).

Belongs to the nucleoside phosphorylase PpnP family.

It carries out the reaction a purine D-ribonucleoside + phosphate = a purine nucleobase + alpha-D-ribose 1-phosphate. The catalysed reaction is adenosine + phosphate = alpha-D-ribose 1-phosphate + adenine. It catalyses the reaction cytidine + phosphate = cytosine + alpha-D-ribose 1-phosphate. The enzyme catalyses guanosine + phosphate = alpha-D-ribose 1-phosphate + guanine. It carries out the reaction inosine + phosphate = alpha-D-ribose 1-phosphate + hypoxanthine. The catalysed reaction is thymidine + phosphate = 2-deoxy-alpha-D-ribose 1-phosphate + thymine. It catalyses the reaction uridine + phosphate = alpha-D-ribose 1-phosphate + uracil. The enzyme catalyses xanthosine + phosphate = alpha-D-ribose 1-phosphate + xanthine. Its function is as follows. Catalyzes the phosphorolysis of diverse nucleosides, yielding D-ribose 1-phosphate and the respective free bases. Can use uridine, adenosine, guanosine, cytidine, thymidine, inosine and xanthosine as substrates. Also catalyzes the reverse reactions. The chain is Pyrimidine/purine nucleoside phosphorylase from Erwinia tasmaniensis (strain DSM 17950 / CFBP 7177 / CIP 109463 / NCPPB 4357 / Et1/99).